Reading from the N-terminus, the 168-residue chain is MSEKAIAVKAQHVEDVVEKFNNATSAIVVDYRGLTVEQVTDLRKQLREAGVQMNVIKNKILTRAAEKAGYGDLNDVFAGPTAVAFSNEDPIAPAKVLKKFADSVDALEIKGGYIEGNIVSIDEINVYATLPSREELLATLASQLQAPVRNVAYAIKAIVDKGDEGDAA.

This sequence belongs to the universal ribosomal protein uL10 family. Part of the ribosomal stalk of the 50S ribosomal subunit. The N-terminus interacts with L11 and the large rRNA to form the base of the stalk. The C-terminus forms an elongated spine to which L12 dimers bind in a sequential fashion forming a multimeric L10(L12)X complex.

Forms part of the ribosomal stalk, playing a central role in the interaction of the ribosome with GTP-bound translation factors. The chain is Large ribosomal subunit protein uL10 from Levilactobacillus brevis (strain ATCC 367 / BCRC 12310 / CIP 105137 / JCM 1170 / LMG 11437 / NCIMB 947 / NCTC 947) (Lactobacillus brevis).